The following is a 91-amino-acid chain: uncharacterized protein (91 aa).

Residues 1–25 form the signal peptide; it reads MLLQRIGIEHLRIWILLLLISLVPA.

This is an uncharacterized protein from Caenorhabditis elegans.